The chain runs to 730 residues: Elongation factor 2 (730 aa).

The tr-type G domain occupies 18–238 (DQIRNFGVIA…YSEGKVDELV (221 aa)). GTP is bound by residues 27 to 34 (AHVDHGKT), 93 to 97 (DTPGH), and 147 to 150 (NKVD). Residue His-595 is modified to Diphthamide. A disordered region spans residues 711 to 730 (RKRKGLAPDPPTVSEFIDRE).

It belongs to the TRAFAC class translation factor GTPase superfamily. Classic translation factor GTPase family. EF-G/EF-2 subfamily.

The protein localises to the cytoplasm. Catalyzes the GTP-dependent ribosomal translocation step during translation elongation. During this step, the ribosome changes from the pre-translocational (PRE) to the post-translocational (POST) state as the newly formed A-site-bound peptidyl-tRNA and P-site-bound deacylated tRNA move to the P and E sites, respectively. Catalyzes the coordinated movement of the two tRNA molecules, the mRNA and conformational changes in the ribosome. In Cenarchaeum symbiosum (strain A), this protein is Elongation factor 2.